A 298-amino-acid chain; its full sequence is Rhodopsin (298 aa).

Residues 1-15 lie on the Extracellular side of the membrane; the sequence is IHLHWYEYPPMNPMM. The helical transmembrane segment at 16-40 threads the bilayer; the sequence is YPLLLIFMLFTGILCLAGNFVTIWV. Residues 41–52 lie on the Cytoplasmic side of the membrane; it reads FMNTKSLRTPAN. The helical transmembrane segment at 53-75 threads the bilayer; sequence LLVVNLAMSDFLMMFTMFPPMMV. Residues 76–89 lie on the Extracellular side of the membrane; sequence TCYYHTWTLGPTFC. A disulfide bond links Cys89 and Cys166. A helical transmembrane segment spans residues 90–112; the sequence is QVYAFLGNLCGCASIWTMVFITF. The 'Ionic lock' involved in activated form stabilization motif lies at 113 to 115; that stretch reads DRY. Topologically, residues 113–131 are cytoplasmic; that stretch reads DRYNVIVKGVAGEPLSTKK. The chain crosses the membrane as a helical span at residues 132–152; that stretch reads ASLWILTIWVLSTTWCMAPFF. Residues 153–179 lie on the Extracellular side of the membrane; that stretch reads GWNHYVPEGNLTGCGTDYLSEDILSRS. A glycan (N-linked (GlcNAc...) asparagine) is linked at Asn162. A helical transmembrane segment spans residues 180–201; sequence YLYVYSTWVYFLPLAITIYCYV. Topologically, residues 202 to 242 are cytoplasmic; sequence FIIKAVAAHEKGMRDQAKKMGIKSLRNEEAQKTSAECRLAK. Residues 243-264 form a helical membrane-spanning segment; it reads IAMTTVALWFIAWTPYLLINWV. At 265–275 the chain is on the extracellular side; the sequence is GMFARSYLSPV. The helical transmembrane segment at 276–297 threads the bilayer; that stretch reads YTIWGYVFAKANAVYNPIVYAI. At Lys285 the chain carries N6-(retinylidene)lysine.

Belongs to the G-protein coupled receptor 1 family. Opsin subfamily. In terms of assembly, homodimer. Interacts with GNAQ. Post-translationally, contains one covalently linked retinal chromophore.

It localises to the cell projection. The protein localises to the rhabdomere membrane. Its function is as follows. Photoreceptor required for image-forming vision at low light intensity. Can use both retinal and 3-dehydroretinal as visual pigment. Light-induced isomerization of 11-cis to all-trans retinal triggers a conformational change that activates signaling via G-proteins. Signaling via GNAQ probably mediates the activation of phospholipase C. The chain is Rhodopsin (RHO) from Procambarus orcinus (Crayfish).